Consider the following 91-residue polypeptide: uncharacterized protein (91 aa).

This is an uncharacterized protein from Kluyveromyces lactis (strain ATCC 8585 / CBS 2359 / DSM 70799 / NBRC 1267 / NRRL Y-1140 / WM37) (Yeast).